A 351-amino-acid polypeptide reads, in one-letter code: Peptide chain release factor 1 (351 aa).

Residue glutamine 229 is modified to N5-methylglutamine.

The protein belongs to the prokaryotic/mitochondrial release factor family. Post-translationally, methylated by PrmC. Methylation increases the termination efficiency of RF1.

It is found in the cytoplasm. In terms of biological role, peptide chain release factor 1 directs the termination of translation in response to the peptide chain termination codons UAG and UAA. The protein is Peptide chain release factor 1 of Dinoroseobacter shibae (strain DSM 16493 / NCIMB 14021 / DFL 12).